The following is a 287-amino-acid chain: Glycine--tRNA ligase alpha subunit (287 aa).

It belongs to the class-II aminoacyl-tRNA synthetase family. In terms of assembly, tetramer of two alpha and two beta subunits.

The protein resides in the cytoplasm. The catalysed reaction is tRNA(Gly) + glycine + ATP = glycyl-tRNA(Gly) + AMP + diphosphate. This chain is Glycine--tRNA ligase alpha subunit, found in Petrotoga mobilis (strain DSM 10674 / SJ95).